The following is a 360-amino-acid chain: Cysteine proteinase 2 (360 aa).

Positions 1 to 19 are cleaved as a signal peptide; the sequence is MVPRRLFVLAVVVLADTAA. The propeptide at 20-142 is activation peptide; sequence VVNSGFADSN…NHRMRAAAVA (123 aa). The N-linked (GlcNAc...) asparagine glycan is linked to asparagine 125. 2 cysteine pairs are disulfide-bonded: cysteine 164–cysteine 207 and cysteine 198–cysteine 240. The active site involves cysteine 167. Asparagine 256 is a glycosylation site (N-linked (GlcNAc...) asparagine). Cysteine 298 and cysteine 348 form a disulfide bridge. Residues histidine 307 and asparagine 327 contribute to the active site.

This sequence belongs to the peptidase C1 family. As to expression, expressed at the onset of germination.

It is found in the vacuole. In terms of biological role, involved in the degradation of the storage protein zein. May play a role in proteolysis during emergencies. This chain is Cysteine proteinase 2 (CCP2), found in Zea mays (Maize).